Reading from the N-terminus, the 200-residue chain is Histone chaperone asf1a-B (200 aa).

It belongs to the ASF1 family. As to quaternary structure, interacts with histone H3 (including both histone H3.1 and H3.3) and histone H4.

The protein localises to the nucleus. Its function is as follows. Histone chaperone that facilitates histone deposition and histone exchange and removal during nucleosome assembly and disassembly. The sequence is that of Histone chaperone asf1a-B (asf1ab) from Xenopus laevis (African clawed frog).